We begin with the raw amino-acid sequence, 257 residues long: Fimbrial assembly protein, serogroup E1 (257 aa).

The sequence is that of Fimbrial assembly protein, serogroup E1 (fimB) from Dichelobacter nodosus (Bacteroides nodosus).